The following is a 687-amino-acid chain: Ataxin-1-like (687 aa).

Residues 1–19 (MKPVHERSQECLPPKKRDL) are compositionally biased toward basic and acidic residues. Disordered stretches follow at residues 1–46 (MKPV…SEWS), 185–223 (ATPP…LDLA), and 261–294 (SALE…KGES). The segment at 20 to 197 (PVTSEDMGRT…PPQAASPAQS (178 aa)) is interaction with NCOR2 and ATXN1. Residues 20-197 (PVTSEDMGRT…PPQAASPAQS (178 aa)) are self-association. Composition is skewed to polar residues over residues 28–43 (RTTS…SDAS) and 198–219 (FNKS…NTQP). Residues 272–283 (RQRERNVRRESE) are compositionally biased toward basic and acidic residues. Phosphoserine is present on Ser282. Residue Thr328 is modified to Phosphothreonine. The interval 356–379 (DEPSPLNLSHHNLDHQGEGRGSAR) is disordered. Phosphoserine is present on Ser359. One can recognise an AXH domain in the interval 455-586 (PPPVTSSHLP…SISLQSLNSN (132 aa)). Positions 587–649 (SVSQASCAPP…PGAQACWPAP (63 aa)) are disordered.

The protein belongs to the ATXN1 family. Homodimer. Interacts (via AXH domain) with NCOR2. Interacts with ATXN1 and CIC. Directly interacts with RBPJ; this interaction is disrupted in the presence of Notch intracellular domain. Competes with ATXN1 for RBPJ-binding. Found in a complex with CIC and ATXN1. Expressed in the cortex and hypothalamus (at protein level). Expressed in neuronal cells. Highly expressed in Purkinje cells of cerebellum.

The protein localises to the nucleus. The protein resides in the cell projection. It is found in the dendrite. Its function is as follows. Chromatin-binding factor that repress Notch signaling in the absence of Notch intracellular domain by acting as a CBF1 corepressor. Binds to the HEY promoter and might assist, along with NCOR2, RBPJ-mediated repression. Can suppress the cytotoxicity of ATXN1 in spinocerebellar ataxia type 1 (SCA1). In concert with CIC and ATXN1, involved in brain development. In Mus musculus (Mouse), this protein is Ataxin-1-like (Atxn1l).